Reading from the N-terminus, the 101-residue chain is Chaperone modulatory protein CbpM (101 aa).

This sequence belongs to the CbpM family.

Its function is as follows. Interacts with CbpA and inhibits both the DnaJ-like co-chaperone activity and the DNA binding activity of CbpA. Together with CbpA, modulates the activity of the DnaK chaperone system. Does not inhibit the co-chaperone activity of DnaJ. In Salmonella arizonae (strain ATCC BAA-731 / CDC346-86 / RSK2980), this protein is Chaperone modulatory protein CbpM.